The following is a 581-amino-acid chain: Arginine--tRNA ligase (581 aa).

A 'HIGH' region motif is present at residues 126 to 136 (PNLAKEMHVGH).

This sequence belongs to the class-I aminoacyl-tRNA synthetase family. As to quaternary structure, monomer.

The protein resides in the cytoplasm. The catalysed reaction is tRNA(Arg) + L-arginine + ATP = L-arginyl-tRNA(Arg) + AMP + diphosphate. The sequence is that of Arginine--tRNA ligase from Shewanella sp. (strain MR-7).